A 99-amino-acid polypeptide reads, in one-letter code: Progonadoliberin-1 (99 aa).

An N-terminal signal peptide occupies residues 1–26 (MAAQTFALRLLLVGTLLGTLLGQGCC). A Pyrrolidone carboxylic acid modification is found at Gln-27. Residue Gly-36 is modified to Glycine amide.

Belongs to the GnRH family.

It is found in the secreted. In terms of biological role, stimulates the secretion of gonadotropins. This is Progonadoliberin-1 (gnrh1) from Dicentrarchus labrax (European seabass).